A 462-amino-acid chain; its full sequence is Bindin (462 aa).

Positions 1–19 (MARQLSVILVALTLTTALA) are cleaved as a signal peptide. Positions 20 to 244 (ENFPTRTSAP…DSGRSARKKR (225 aa)) are excised as a propeptide. 2 disordered regions span residues 155 to 194 (DDRR…APKD) and 221 to 278 (RTRR…QGMG). Positions 372 to 380 (LRHLRHHSN) are fucose-binding domain.

This sequence belongs to the bindin family.

The protein resides in the cytoplasmic vesicle. It localises to the secretory vesicle. The protein localises to the acrosome lumen. In terms of biological role, species-specific sea urchin sperm protein required for adhesion of sperm to the egg surface during fertilization. Bindin coats the acrosomal process after it is externalized by the acrosome reaction. It binds to sulfated, fucose-containing polysaccharides on the vitelline layer receptor proteoglycans which cover the egg plasma membrane. The polypeptide is Bindin (Lytechinus variegatus (Green sea urchin)).